We begin with the raw amino-acid sequence, 498 residues long: Glutamyl-tRNA(Gln) amidotransferase subunit A (498 aa).

Active-site charge relay system residues include Lys85 and Ser160. Ser184 serves as the catalytic Acyl-ester intermediate.

It belongs to the amidase family. GatA subfamily. As to quaternary structure, heterotrimer of A, B and C subunits.

It carries out the reaction L-glutamyl-tRNA(Gln) + L-glutamine + ATP + H2O = L-glutaminyl-tRNA(Gln) + L-glutamate + ADP + phosphate + H(+). Allows the formation of correctly charged Gln-tRNA(Gln) through the transamidation of misacylated Glu-tRNA(Gln) in organisms which lack glutaminyl-tRNA synthetase. The reaction takes place in the presence of glutamine and ATP through an activated gamma-phospho-Glu-tRNA(Gln). The sequence is that of Glutamyl-tRNA(Gln) amidotransferase subunit A from Mycolicibacterium vanbaalenii (strain DSM 7251 / JCM 13017 / BCRC 16820 / KCTC 9966 / NRRL B-24157 / PYR-1) (Mycobacterium vanbaalenii).